The primary structure comprises 342 residues: N-acetyl-gamma-glutamyl-phosphate reductase (342 aa).

Cys-156 is a catalytic residue.

This sequence belongs to the NAGSA dehydrogenase family. Type 1 subfamily.

It is found in the cytoplasm. The enzyme catalyses N-acetyl-L-glutamate 5-semialdehyde + phosphate + NADP(+) = N-acetyl-L-glutamyl 5-phosphate + NADPH + H(+). The protein operates within amino-acid biosynthesis; L-arginine biosynthesis; N(2)-acetyl-L-ornithine from L-glutamate: step 3/4. Catalyzes the NADPH-dependent reduction of N-acetyl-5-glutamyl phosphate to yield N-acetyl-L-glutamate 5-semialdehyde. This chain is N-acetyl-gamma-glutamyl-phosphate reductase, found in Pseudoalteromonas atlantica (strain T6c / ATCC BAA-1087).